The sequence spans 431 residues: Enolase (431 aa).

Residue Q163 coordinates (2R)-2-phosphoglycerate. The Proton donor role is filled by E205. Residues D242, E288, and D315 each contribute to the Mg(2+) site. Residues K340, R369, S370, and K391 each coordinate (2R)-2-phosphoglycerate. The active-site Proton acceptor is the K340.

This sequence belongs to the enolase family. Requires Mg(2+) as cofactor.

It localises to the cytoplasm. Its subcellular location is the secreted. The protein resides in the cell surface. It catalyses the reaction (2R)-2-phosphoglycerate = phosphoenolpyruvate + H2O. It participates in carbohydrate degradation; glycolysis; pyruvate from D-glyceraldehyde 3-phosphate: step 4/5. In terms of biological role, catalyzes the reversible conversion of 2-phosphoglycerate (2-PG) into phosphoenolpyruvate (PEP). It is essential for the degradation of carbohydrates via glycolysis. This chain is Enolase, found in Bacillus cereus (strain AH187).